We begin with the raw amino-acid sequence, 381 residues long: Putative steryl acetyl hydrolase mug81 (381 aa).

Topologically, residues 1-9 (MISLSLLYR) are cytoplasmic. A helical; Signal-anchor for type II membrane protein transmembrane segment spans residues 10 to 30 (ILTLPIILVGTTILYFTIGTN). Residues 31-381 (FPHDELRHNL…YTFLRETFEE (351 aa)) are Lumenal-facing. Positions 125–127 (HGG) match the Involved in the stabilization of the negatively charged intermediate by the formation of the oxyanion hole motif. Residue Asn-193 is glycosylated (N-linked (GlcNAc...) asparagine). Ser-200 is a catalytic residue.

Belongs to the 'GDXG' lipolytic enzyme family.

It localises to the cytoplasm. The protein localises to the endoplasmic reticulum membrane. In terms of biological role, required for the deacetylation of acetylated sterols. Has a role in meiosis. This chain is Putative steryl acetyl hydrolase mug81 (mug180), found in Schizosaccharomyces pombe (strain 972 / ATCC 24843) (Fission yeast).